Consider the following 119-residue polypeptide: Large ribosomal subunit protein uL18 (119 aa).

This sequence belongs to the universal ribosomal protein uL18 family. In terms of assembly, part of the 50S ribosomal subunit; part of the 5S rRNA/L5/L18/L25 subcomplex. Contacts the 5S and 23S rRNAs.

Functionally, this is one of the proteins that bind and probably mediate the attachment of the 5S RNA into the large ribosomal subunit, where it forms part of the central protuberance. This chain is Large ribosomal subunit protein uL18, found in Paracoccus denitrificans (strain Pd 1222).